A 112-amino-acid polypeptide reads, in one-letter code: Protein preY, mitochondrial (112 aa).

The transit peptide at 1–34 (MLTTTCRRLSQALQRPHALSAVAQRCLRAPGARS) directs the protein to the mitochondrion. Residues 49–95 (HPALLQFLVCPLSKKPLRYDASTNELINDELGIAYPIIDGVPNMIPQ) enclose the TRM112 domain.

It belongs to the PREY family. As to quaternary structure, interacts (via TRM112 domain) with NDUFAF5; the interaction is direct and stabilizes NDUFAF5 protein. Interacts with COQ5; the interaction is direct, stabilizes COQ5 protein and associates PYURF with COQ enzyme complex.

It localises to the mitochondrion. Its function is as follows. In mitochondria, S-adenosylmethionine-dependent methyltransferase chaperone that supports both coenzyme Q biosynthesis, by stabilizing its components, such as COQ5, and NADH:ubiquinone oxidoreductase complex (complex I, MT-ND1) assembly, by stabilizing complex I assembly factors, such as NDUFAF5. The chain is Protein preY, mitochondrial (Pyurf) from Rattus norvegicus (Rat).